Consider the following 473-residue polypeptide: MATVAEQWVLVEMVQALYEAPAYHLILEGILILWIIRLVFSKTYKLQERSDLTAKEKEELIEEWQPEPLVPPVSKNHPALNYNIVSGPPTHNIVVNGKECVNFASFNFLGLLANPRVKATAFSSLKKYGVGTCGPRGFYGTFDVHLDLEERLAKFMKTEEAIIYSYGFSTIASAIPAYSKRGDIIFVDSAACFAIQKGLQASRSDIKLFKHNDVADLERLLKEQEIEDQKNPRKARVTRRFIVVEGLYMNTGTICPLPELVKLKYKYKARIFLEESLSFGVLGEHGRGVTEHYGISIDDIDLISANMENALASVGGFCCGRSFVVDHQRLSGQGYCFSASLPPLLAAAAIEALNIMEENPDIFAVLKKKCQNIHKSLQGVSGLKVVGESLSPALHLQLEESTGSREKDVKLLQAIVDQCMDKGIALTQARYLDKEEKCLPPPSIRVVVTVEQTEEELQRAASTIREAAQAVLL.

The Lumenal segment spans residues 1–15 (MATVAEQWVLVEMVQ). Residues 1–66 (MATVAEQWVL…KEELIEEWQP (66 aa)) are interaction with SPTLC2. A helical membrane pass occupies residues 16–36 (ALYEAPAYHLILEGILILWII). The Cytoplasmic portion of the chain corresponds to 37–473 (RLVFSKTYKL…IREAAQAVLL (437 aa)). At Tyr-164 the chain carries Phosphotyrosine; by ABL.

The protein belongs to the class-II pyridoxal-phosphate-dependent aminotransferase family. As to quaternary structure, component of the serine palmitoyltransferase (SPT) complex, which is also composed of SPTLC2 or SPTLC3 and SPTSSA or SPTSSB. The heterodimer with SPTLC2 or SPTLC3 forms the catalytic core of the enzyme, while SPTSSA or SPTSSB subunits determine substrate specificity. SPT also interacts with ORMDL proteins, especially ORMDL3, which negatively regulate SPT activity in the presence of ceramides. Forms dimers of heterodimers with SPTLC2. Interacts with RTN4 (isoform B). Pyridoxal 5'-phosphate is required as a cofactor. Phosphorylation at Tyr-164 inhibits activity and promotes cell survival. Expressed in a variety of tissues. Highest expression in brain, kidney and liver. Expressed in brown and white adipose tissues.

It localises to the endoplasmic reticulum membrane. The catalysed reaction is L-serine + hexadecanoyl-CoA + H(+) = 3-oxosphinganine + CO2 + CoA. It carries out the reaction octadecanoyl-CoA + L-serine + H(+) = 3-oxoeicosasphinganine + CO2 + CoA. The enzyme catalyses tetradecanoyl-CoA + L-serine + H(+) = 3-oxohexadecasphinganine + CO2 + CoA. It catalyses the reaction dodecanoyl-CoA + L-serine + H(+) = 3-oxotetradecasphinganine + CO2 + CoA. It functions in the pathway lipid metabolism; sphingolipid metabolism. Its activity is regulated as follows. SPT complex catalytic activity is negatively regulated by ORMDL proteins, including ORMDL3, in the presence of ceramides. This mechanism allows to maintain ceramide levels at sufficient concentrations for the production of complex sphingolipids, but which prevents the accumulation of ceramides to levels that trigger apoptosis. Its function is as follows. Component of the serine palmitoyltransferase multisubunit enzyme (SPT) that catalyzes the initial and rate-limiting step in sphingolipid biosynthesis by condensing L-serine and activated acyl-CoA (most commonly palmitoyl-CoA) to form long-chain bases. The SPT complex is also composed of SPTLC2 or SPTLC3 and SPTSSA or SPTSSB. Within this complex, the heterodimer with SPTLC2 or SPTLC3 forms the catalytic core. The composition of the serine palmitoyltransferase (SPT) complex determines the substrate preference. The SPTLC1-SPTLC2-SPTSSA complex shows a strong preference for C16-CoA substrate, while the SPTLC1-SPTLC3-SPTSSA isozyme uses both C14-CoA and C16-CoA as substrates, with a slight preference for C14-CoA. The SPTLC1-SPTLC2-SPTSSB complex shows a strong preference for C18-CoA substrate, while the SPTLC1-SPTLC3-SPTSSB isozyme displays an ability to use a broader range of acyl-CoAs, without apparent preference. Required for adipocyte cell viability and metabolic homeostasis. This Mus musculus (Mouse) protein is Serine palmitoyltransferase 1 (Sptlc1).